The sequence spans 559 residues: Amino-acid acetyltransferase, mitochondrial (559 aa).

The segment at 162-188 (RLGPKPGSEDPTSELDFTPPETHTLPP) is disordered. One can recognise an N-acetyltransferase domain in the interval 362-538 (LPVQVFHSVS…GSAGLSYVED (177 aa)).

Belongs to the acetyltransferase family.

It is found in the mitochondrion. It carries out the reaction L-glutamate + acetyl-CoA = N-acetyl-L-glutamate + CoA + H(+). It participates in amino-acid biosynthesis; L-arginine biosynthesis; N(2)-acetyl-L-ornithine from L-glutamate: step 1/4. N-acetylglutamate synthase involved in arginine biosynthesis. This chain is Amino-acid acetyltransferase, mitochondrial (ARG2), found in Laccaria bicolor (strain S238N-H82 / ATCC MYA-4686) (Bicoloured deceiver).